The sequence spans 163 residues: NADH-quinone oxidoreductase subunit I (163 aa).

4Fe-4S ferredoxin-type domains are found at residues 53–83 and 94–123; these read LRRYPNGEERCIACKLCEAICPAQAITIEAG and VRYDIDMVKCIYCGFCQEACPVDAIVEGPN. 8 residues coordinate [4Fe-4S] cluster: cysteine 63, cysteine 66, cysteine 69, cysteine 73, cysteine 103, cysteine 106, cysteine 109, and cysteine 113.

Belongs to the complex I 23 kDa subunit family. In terms of assembly, NDH-1 is composed of 14 different subunits. Subunits NuoA, H, J, K, L, M, N constitute the membrane sector of the complex. Requires [4Fe-4S] cluster as cofactor.

It localises to the cell inner membrane. The catalysed reaction is a quinone + NADH + 5 H(+)(in) = a quinol + NAD(+) + 4 H(+)(out). NDH-1 shuttles electrons from NADH, via FMN and iron-sulfur (Fe-S) centers, to quinones in the respiratory chain. The immediate electron acceptor for the enzyme in this species is believed to be ubiquinone. Couples the redox reaction to proton translocation (for every two electrons transferred, four hydrogen ions are translocated across the cytoplasmic membrane), and thus conserves the redox energy in a proton gradient. The protein is NADH-quinone oxidoreductase subunit I of Brucella suis (strain ATCC 23445 / NCTC 10510).